A 31-amino-acid polypeptide reads, in one-letter code: U14-ctenitoxin-Co1a (31 aa).

Post-translationally, disulfide bonds are present. As to expression, expressed by the venom gland.

Its subcellular location is the secreted. In terms of biological role, omega-agatoxins are antagonists of voltage-gated calcium channels (Cav). This is U14-ctenitoxin-Co1a from Ctenus ornatus (Brazilian spider).